The primary structure comprises 368 residues: 3-isopropylmalate dehydrogenase (368 aa).

80–93 contacts NAD(+); sequence GPKWDNLEFSKKPE. Substrate contacts are provided by R100, R110, R138, and D229. The Mg(2+) site is built by D229, D253, and D257. NAD(+) is bound at residue 292–304; that stretch reads GSAPDIAGKEIAN.

This sequence belongs to the isocitrate and isopropylmalate dehydrogenases family. LeuB type 1 subfamily. Homodimer. Mg(2+) is required as a cofactor. Mn(2+) serves as cofactor.

It localises to the cytoplasm. It catalyses the reaction (2R,3S)-3-isopropylmalate + NAD(+) = 4-methyl-2-oxopentanoate + CO2 + NADH. It functions in the pathway amino-acid biosynthesis; L-leucine biosynthesis; L-leucine from 3-methyl-2-oxobutanoate: step 3/4. Catalyzes the oxidation of 3-carboxy-2-hydroxy-4-methylpentanoate (3-isopropylmalate) to 3-carboxy-4-methyl-2-oxopentanoate. The product decarboxylates to 4-methyl-2 oxopentanoate. This is 3-isopropylmalate dehydrogenase from Pelagibacter ubique (strain HTCC1062).